The chain runs to 218 residues: Elongation factor Ts (218 aa).

The involved in Mg(2+) ion dislocation from EF-Tu stretch occupies residues 82 to 85 (TDFV).

The protein belongs to the EF-Ts family.

It is found in the cytoplasm. Its function is as follows. Associates with the EF-Tu.GDP complex and induces the exchange of GDP to GTP. It remains bound to the aminoacyl-tRNA.EF-Tu.GTP complex up to the GTP hydrolysis stage on the ribosome. This chain is Elongation factor Ts, found in Prochlorococcus marinus (strain MIT 9303).